A 258-amino-acid polypeptide reads, in one-letter code: Phosphate import ATP-binding protein PstB (258 aa).

Positions 13–253 (ITVENLNLWY…PREKSTEDYI (241 aa)) constitute an ABC transporter domain. 45–52 (GPSGCGKS) contacts ATP.

Belongs to the ABC transporter superfamily. Phosphate importer (TC 3.A.1.7) family. The complex is composed of two ATP-binding proteins (PstB), two transmembrane proteins (PstC and PstA) and a solute-binding protein (PstS).

Its subcellular location is the cell membrane. The enzyme catalyses phosphate(out) + ATP + H2O = ADP + 2 phosphate(in) + H(+). Part of the ABC transporter complex PstSACB involved in phosphate import. Responsible for energy coupling to the transport system. The sequence is that of Phosphate import ATP-binding protein PstB from Methanosarcina mazei (strain ATCC BAA-159 / DSM 3647 / Goe1 / Go1 / JCM 11833 / OCM 88) (Methanosarcina frisia).